Consider the following 685-residue polypeptide: Sodium/glucose cotransporter 4 (685 aa).

The segment at 1-20 is disordered; the sequence is MNTELVAMEPGVSRNGVRTE. Topologically, residues 1–32 are extracellular; the sequence is MNTELVAMEPGVSRNGVRTETTTNPSLGLHTY. The helical transmembrane segment at 33 to 53 threads the bilayer; it reads DIVVVVIYFVFVLAVGIWSSI. Residues 54–71 are Cytoplasmic-facing; that stretch reads RASRGTVGGYFLAGRSMT. The chain crosses the membrane as a helical span at residues 72 to 94; that stretch reads WWPIGASLMSSNVGSGLFIGLAG. The Extracellular portion of the chain corresponds to 95-110; the sequence is TGAAGGLAVGGFEWNA. Residues 111 to 131 traverse the membrane as a helical segment; it reads TFLLLALGWIFVPVYIAAGVV. Topologically, residues 132–153 are cytoplasmic; sequence TMPQYLKKRFGGQRIQVYMSVL. A helical membrane pass occupies residues 154-174; sequence SLILYIFTKISTDIFSGALFI. Residues 175–186 are Extracellular-facing; sequence QMALGWNLYLST. A helical membrane pass occupies residues 187–207; it reads VILLVVTAVYTIAGGLTAVIY. Topologically, residues 208–213 are cytoplasmic; the sequence is TDALQT. The helical transmembrane segment at 214–234 threads the bilayer; sequence VIMVGGALVLMFLGFQEVGWY. At 235–271 the chain is on the extracellular side; that stretch reads PGLQQLYRQAIPNTTVPNTTCHLPRPDAFHMLRDPVN. The N-linked (GlcNAc...) asparagine glycan is linked to asparagine 247. The chain crosses the membrane as a helical span at residues 272–292; that stretch reads GDIPWPGLIFGLTVLATWCWC. The Cytoplasmic segment spans residues 293–313; sequence TDQVIVQRSLAAKNLSHAKGG. The helical transmembrane segment at 314–334 threads the bilayer; the sequence is SVLGGYLKILPMFFIVMPGMI. At 335 to 379 the chain is on the extracellular side; sequence SRALYPDEVACVDPDICQRVCGARVGCSNIAYPKLVMALMPVGLR. Residues 380–402 traverse the membrane as a helical segment; that stretch reads GLMIAVIMAALMSSLTSIFNSSS. Residues 403–423 are Cytoplasmic-facing; it reads TLFAIDVWQRFRRQASEQELM. The chain crosses the membrane as a helical span at residues 424-444; the sequence is VVGRLFVVFLVVISILWIPII. Residues 445 to 455 lie on the Extracellular side of the membrane; it reads QSSNSGQLFDY. The chain crosses the membrane as a helical span at residues 456-476; sequence IQSITSYLAPPITALFLLAIF. At 477–483 the chain is on the cytoplasmic side; it reads CKRVNEP. A helical transmembrane segment spans residues 484-504; that stretch reads GAFWGLMFGLVVGILRMILEF. The Extracellular portion of the chain corresponds to 505–526; it reads SYSAPACGEMDRRPAVLKDFHY. The chain crosses the membrane as a helical span at residues 527-547; it reads LYFALLLCGLTAIIIVVISFF. At 548–664 the chain is on the cytoplasmic side; sequence TEPIPDDKLA…SIEEEPLWRR (117 aa). Positions 577 to 616 are disordered; that stretch reads VSVNNTEDDNSPGLAGRPVVEGPAGDEEEANTTQGPEQPG. Residues 665–685 traverse the membrane as a helical segment; the sequence is VCNINAIILLAINIFLWGYFA.

Belongs to the sodium:solute symporter (SSF) (TC 2.A.21) family.

Its subcellular location is the cell membrane. It catalyses the reaction D-mannose(out) + n Na(+)(out) = D-mannose(in) + n Na(+)(in). In terms of biological role, electrogenic Na(+)-coupled sugar symporter that may play a primary role in D-mannose and possibly D-fructose and D-glucose transport at the plasma membrane. Transporter activity is driven by a transmembrane Na(+) electrochemical gradient set by the Na(+)/K(+) pump. Exclusively recognizes sugar substrates having a pyranose ring with an axial hydroxyl group on carbon 2. The chain is Sodium/glucose cotransporter 4 (Slc5a9) from Mus musculus (Mouse).